The sequence spans 105 residues: Thioredoxin (105 aa).

One can recognise a Thioredoxin domain in the interval 2–105 (VKQIESKYAF…KLEATINELI (104 aa)). Position 3 is an N6-acetyllysine (Lys3). Lys8 bears the N6-succinyllysine mark. Residues Cys32 and Cys35 each act as nucleophile in the active site. A disulfide bridge links Cys32 with Cys35. Position 39 is an N6-acetyllysine (Lys39). An S-nitrosocysteine mark is found at Cys62 and Cys69. S-nitrosocysteine; alternate is present on Cys73. Lys94 is modified (N6-acetyllysine; alternate). Lys94 is modified (N6-succinyllysine; alternate).

The protein belongs to the thioredoxin family. Homodimer; disulfide-linked. Interacts with TXNIP through the redox-active site. Interacts with MAP3K5 and CASP3. Interacts with APEX1; the interaction stimulates the FOS/JUN AP-1 DNA-binding activity in a redox-dependent manner. In terms of processing, in the fully reduced protein, both Cys-69 and Cys-73 are nitrosylated in response to nitric oxide (NO). When two disulfide bonds are present in the protein, only Cys-73 is nitrosylated. Cys-73 can serve as donor for nitrosylation of target proteins. In terms of tissue distribution, erythrocytes.

Its subcellular location is the nucleus. The protein localises to the cytoplasm. It is found in the secreted. Participates in various redox reactions through the reversible oxidation of its active center dithiol to a disulfide and catalyzes dithiol-disulfide exchange reactions. Plays a role in the reversible S-nitrosylation of cysteine residues in target proteins, and thereby contributes to the response to intracellular nitric oxide. Nitrosylates the active site Cys of CASP3 in response to nitric oxide (NO), and thereby inhibits caspase-3 activity. Induces the FOS/JUN AP-1 DNA binding activity in ionizing radiation (IR) cells through its oxidation/reduction status and stimulates AP-1 transcriptional activity. The chain is Thioredoxin (TXN) from Sus scrofa (Pig).